Consider the following 64-residue polypeptide: Translation machinery-associated protein 7 homolog (64 aa).

The tract at residues 1–64 (MSGREGGKKK…QGGIKKSGKK (64 aa)) is disordered. Residues 27 to 44 (VAFKQKQKEQQKALDAAK) show a composition bias toward basic and acidic residues.

Belongs to the TMA7 family.

In Anopheles funestus (African malaria mosquito), this protein is Translation machinery-associated protein 7 homolog.